The primary structure comprises 418 residues: Phosphoglycerate kinase (418 aa).

14 residues coordinate (2R)-3-phosphoglycerate: V23, D24, F25, N26, Q39, R40, S63, H64, G66, R67, L122, R123, H170, and R171. G214 lines the ADP pocket. G214 provides a ligand contact to CDP. Residues A215 and K216 each contribute to the AMP site. A215 contributes to the ATP binding site. Residue A215 coordinates Mg(2+). Residue D219 coordinates CDP. D219 contributes to the Mg(2+) binding site. K220 provides a ligand contact to AMP. K220 is a binding site for ATP. ADP is bound at residue G238. Residue G238 participates in CDP binding. Residues G239 and G313 each coordinate AMP. Positions 239 and 313 each coordinate ATP. CDP is bound by residues G338, A340, and F343. Position 343 (F343) interacts with ADP. E344 provides a ligand contact to AMP. ATP contacts are provided by E344, D375, and T376. Residue D375 coordinates Mg(2+).

This sequence belongs to the phosphoglycerate kinase family. As to quaternary structure, monomer. The cofactor is Mg(2+).

Its subcellular location is the cytoplasm. It is found in the mitochondrion. The catalysed reaction is (2R)-3-phosphoglycerate + ATP = (2R)-3-phospho-glyceroyl phosphate + ADP. The protein operates within carbohydrate degradation; glycolysis; pyruvate from D-glyceraldehyde 3-phosphate: step 2/5. In terms of biological role, catalyzes one of the two ATP producing reactions in the glycolytic pathway via the reversible conversion of 1,3-diphosphoglycerate to 3-phosphoglycerate. Both L- and D- forms of purine and pyrimidine nucleotides can be used as substrates, but the activity is much lower on pyrimidines. Negatively regulates the biosynthesis of acetyl-CoA from pyruvate in the mitochondrion. The polypeptide is Phosphoglycerate kinase (pgk-1) (Neurospora crassa (strain ATCC 24698 / 74-OR23-1A / CBS 708.71 / DSM 1257 / FGSC 987)).